Reading from the N-terminus, the 213-residue chain is Thymidylate kinase (213 aa).

10 to 17 (GLEGAGKT) is an ATP binding site.

Belongs to the thymidylate kinase family.

It carries out the reaction dTMP + ATP = dTDP + ADP. Functionally, phosphorylation of dTMP to form dTDP in both de novo and salvage pathways of dTTP synthesis. The polypeptide is Thymidylate kinase (Escherichia coli O6:H1 (strain CFT073 / ATCC 700928 / UPEC)).